We begin with the raw amino-acid sequence, 308 residues long: Sulfate adenylyltransferase subunit 2 (308 aa).

This sequence belongs to the PAPS reductase family. CysD subfamily. Heterodimer composed of CysD, the smaller subunit, and CysN.

The enzyme catalyses sulfate + ATP + H(+) = adenosine 5'-phosphosulfate + diphosphate. It functions in the pathway sulfur metabolism; hydrogen sulfide biosynthesis; sulfite from sulfate: step 1/3. In terms of biological role, with CysN forms the ATP sulfurylase (ATPS) that catalyzes the adenylation of sulfate producing adenosine 5'-phosphosulfate (APS) and diphosphate, the first enzymatic step in sulfur assimilation pathway. APS synthesis involves the formation of a high-energy phosphoric-sulfuric acid anhydride bond driven by GTP hydrolysis by CysN coupled to ATP hydrolysis by CysD. The polypeptide is Sulfate adenylyltransferase subunit 2 (Chromobacterium violaceum (strain ATCC 12472 / DSM 30191 / JCM 1249 / CCUG 213 / NBRC 12614 / NCIMB 9131 / NCTC 9757 / MK)).